The primary structure comprises 270 residues: tRNA pseudouridine synthase A (270 aa).

D52 serves as the catalytic Nucleophile. Position 110 (Y110) interacts with substrate.

It belongs to the tRNA pseudouridine synthase TruA family. Homodimer.

It catalyses the reaction uridine(38/39/40) in tRNA = pseudouridine(38/39/40) in tRNA. Its function is as follows. Formation of pseudouridine at positions 38, 39 and 40 in the anticodon stem and loop of transfer RNAs. The protein is tRNA pseudouridine synthase A of Roseiflexus castenholzii (strain DSM 13941 / HLO8).